A 276-amino-acid polypeptide reads, in one-letter code: uncharacterized protein (276 aa).

Residue Tyr47 is the Proton donor of the active site. Substrate is bound at residue His110.

The protein belongs to the aldo/keto reductase family.

It localises to the cytoplasm. Its subcellular location is the nucleus. This is an uncharacterized protein from Schizosaccharomyces pombe (strain 972 / ATCC 24843) (Fission yeast).